The primary structure comprises 429 residues: Stromal membrane-associated protein 2 (429 aa).

The region spanning 13–137 (QAVLANLLLE…LDINAFRKEK (125 aa)) is the Arf-GAP domain. The C4-type zinc finger occupies 28-51 (CADCQSKGPRWASWNIGVFICIRC). A Phosphoserine modification is found at Ser127. Basic and acidic residues predominate over residues 138-172 (DNKWKRGSEPAPEKKMEPVVFEKVKMPQKKEDPQL). Disordered stretches follow at residues 138–181 (DNKW…PKSK) and 217–263 (VSSP…KKQL). An interaction with clathrin heavy chains region spans residues 163–232 (MPQKKEDPQL…SVSRKVVGSM (70 aa)). A compositionally biased stretch (low complexity) spans 217–231 (VSSPSSSVSRKVVGS). Phosphoserine is present on residues Ser219, Ser223, Ser225, Ser231, and Ser240. Residues 253–263 (SKSEETSKKQL) show a composition bias toward basic and acidic residues. The tract at residues 340–429 (MGGMQASMMG…NQTLSPQMWK (90 aa)) is interaction with PICALM.

As to quaternary structure, interacts with ARF1. Interacts with PICALM and clathrin heavy chains.

The protein resides in the cytoplasm. GTPase activating protein that acts on ARF1. Can also activate ARF6 (in vitro). May play a role in clathrin-dependent retrograde transport from early endosomes to the trans-Golgi network. The polypeptide is Stromal membrane-associated protein 2 (SMAP2) (Bos taurus (Bovine)).